Here is a 261-residue protein sequence, read N- to C-terminus: MEDGELDFSNQEVFSSSEMGELPPSNCSMDSFFDGLLMDTNAACTHTHTCNPTGPENTHTHTCFHVHTKILPDESDEKVSTDDTAESCGKKGEKRPLGNREAVRKYREKKKAKAASLEDEVARLRAVNQQLVKRLQNQATLEAEVSRLKCLLVDLRGRIDGEIGSFPYQKPMAANIPSFSHMMNPCNVQCDDEVYCPQNVFGVNSQEGASINDQGLSGCDFDQLQCMANQNLNGNGNGSFSNVNTSVSNKRKGGHRASRAV.

Disordered regions lie at residues 1–22 and 74–100; these read MEDG…MGEL and ESDE…LGNR. Polar residues predominate over residues 8 to 18; it reads FSNQEVFSSSE. Positions 88–100 are enriched in basic and acidic residues; the sequence is CGKKGEKRPLGNR. One can recognise a bZIP domain in the interval 89–155; it reads GKKGEKRPLG…SRLKCLLVDL (67 aa). A basic motif region spans residues 90–113; sequence KKGEKRPLGNREAVRKYREKKKAK. Positions 117 to 131 are leucine-zipper; sequence LEDEVARLRAVNQQL. The segment covering 237 to 248 has biased composition (low complexity); it reads NGSFSNVNTSVS. The tract at residues 237-261 is disordered; sequence NGSFSNVNTSVSNKRKGGHRASRAV. Positions 249–261 are enriched in basic residues; sequence NKRKGGHRASRAV.

The protein resides in the nucleus. Transcription factor involved in the response to zinc ion deficiency. Binds to the consensus sequence 5'-[AG]TGTCGACA[CT]-3' also called zinc deficiency response element (ZDRE). The ZDRE sequence is conserved in the plant kingdom and present in the promoters of genes that constitute the primary response to zinc deficiency, comprising additional ZIP metal transporter genes. Required for zinc accumulation in roots. Mediates the expression of the zinc transporters ZIP3, ZIP4, ZIP5 and ZIP9 during growth in zinc-deficient conditions. ZIP9 transporter is involved in zinc uptake in roots. The chain is Basic leucine zipper 19 from Arabidopsis thaliana (Mouse-ear cress).